An 8797-amino-acid chain; its full sequence is Nesprin-1 (8797 aa).

Residues 1–289 (MATSRGASRC…KHYPDIHNAS (289 aa)) are actin-binding. Topologically, residues 1–8746 (MATSRGASRC…GRGFLFRVLR (8746 aa)) are cytoplasmic. 2 Calponin-homology (CH) domains span residues 27-134 (IVQK…LYFQ) and 178-283 (GNAK…KHYP). 52 Spectrin repeats span residues 314–397 (REDR…SRLF), 398–502 (DWHI…HLMK), 503–609 (MEFL…SMLE), 610–703 (EVIS…YAQA), 704–815 (DEMD…QLLI), 816–923 (PLEE…KHVE), 924–1024 (TNSR…HLKI), 1025–1122 (DVEK…LMED), 1123–1246 (PDKW…NSLE), 1247–1335 (ELIS…ERRI), 1336–1444 (QVTL…MEMV), 1445–1550 (KTKW…ILGH), 1551–1653 (LSQQ…LENL), 1654–1763 (LAHW…LQSV), 1764–1879 (VAEH…SHAS), 1880–1976 (LSGI…ADAL), 1977–2081 (AVLK…QGQC), 2082–2195 (CGLI…LRVS), 2196–2303 (LSIW…KDFT), 2304–2401 (AQST…KTQA), 2402–2513 (SLQE…LQDC), 2514–2619 (ASEL…LRSC), 2620–2731 (QVAL…LESV), 2732–2838 (ISQW…VEEI), 2839–2962 (VKDH…SGQV), 2963–3062 (AQLE…QNKE), 3063–3171 (QILQ…LENL), 3172–3275 (KIQM…VSRL), 3276–3387 (DRIV…LEGA), 3388–3490 (LSKW…SEKL), 3491–3593 (VRLH…RTQF), 3594–3720 (NNVV…YSDW), 3721–3814 (YGST…LEKG), 3815–3920 (LHLA…LEAK), 3921–4028 (VKDH…QRMY), 4029–4139 (QSLE…KHLK), 4140–4235 (SELW…REED), 4236–4339 (LQRT…IQVS), 4340–4451 (VTNL…LNKA), 4452–4560 (LSEK…LEKN), 4561–4669 (LVSR…VQEA), 4670–4776 (ILAR…LEDT), 4777–4882 (TSAY…CESR), 4883–4991 (MVQS…LTEI), 4992–5099 (YSQC…LQRC), 5100–5209 (TAQW…LEDA), 5210–5318 (VDEW…GKLV), 5319–5424 (KQEL…EQSK), 5425–5522 (ATSQ…LSKL), 5523–5630 (NQAA…LQDA), 5631–5736 (AKDM…MQEA), and 5737–5842 (VVQY…PSAH). Residues 314–8666 (REDRVIFKEM…EKLLDVSSSQ (8353 aa)) adopt a coiled-coil conformation. The residue at position 732 (Ser-732) is a Phosphoserine. At Thr-2270 the chain carries Phosphothreonine. Ser-5657 carries the post-translational modification Phosphoserine. The tract at residues 5859–5886 (PVTEESGEEGTNSEISSPPACRSPSPVA) is disordered. 19 Spectrin repeats span residues 5962-6071 (LERQ…LEEK), 6072-6178 (LNDQ…SLLE), 6374-6485 (RQSI…RLQQ), 6486-6581 (ILNF…RSGL), 6582-6691 (NQNL…LETW), 6692-6795 (SHLD…TILK), 6796-6902 (HWTR…QEKL), 6903-7020 (HQLQ…LEGL), 7021-7128 (LESW…LKSV), 7129-7237 (LDQW…SKAL), 7238-7350 (LQLW…LQAG), 7351-7454 (VLDY…LQSF), 7455-7558 (LLQH…RGII), 7559-7671 (DSQI…LAFL), 7672-7783 (LKDW…NEWA), 7784-7883 (VFSE…LKET), 7884-7997 (LVAV…IEET), 7998-8106 (WRLW…LKHF), and 8107-8216 (IGQR…LPLP). Ser-8223 carries the post-translational modification Phosphoserine. The interval 8246–8279 (DSLLSPQPSSNLSLSLAQPLRSERSGRDTPASVD) is disordered. A compositionally biased stretch (low complexity) spans 8247–8265 (SLLSPQPSSNLSLSLAQPL). Thr-8274 is modified (phosphothreonine). Phosphoserine occurs at positions 8277, 8280, and 8305. Spectrin repeat units lie at residues 8329–8438 (SALE…MKQN), 8439–8548 (LQKW…LQDA), and 8549–8666 (LMQC…SSSQ). Position 8360 is a phosphothreonine (Thr-8360). Positions 8671–8734 (SWSSADELDT…DSSLSEPGPG (64 aa)) are disordered. 2 stretches are compositionally biased toward polar residues: residues 8680 to 8696 (TSGSVSPTSGRSTPNRQ) and 8704 to 8729 (SLSQPGPSVSSPHSRSTKGGSDSSLS). The KASH domain maps to 8738–8797 (RGFLFRVLRAALPLQLLLLLLIGLACLVPMSEEDYSCALSNNFARSFHPMLRYTNGPPPL). The helical; Anchor for type IV membrane protein transmembrane segment at 8747-8767 (AALPLQLLLLLLIGLACLVPM) threads the bilayer. The Perinuclear space portion of the chain corresponds to 8768–8797 (SEEDYSCALSNNFARSFHPMLRYTNGPPPL).

The protein belongs to the nesprin family. As to quaternary structure, core component of LINC complexes which are composed of inner nuclear membrane SUN domain-containing proteins coupled to outer nuclear membrane KASH domain-containing nesprins. SUN and KASH domain-containing proteins seem to bind each other promiscuously; however, differentially expression of LINC complex constituents can give rise to specific assemblies. At least SUN1/2-containing core LINC complexes are proposed to be hexameric composed of three protomers of each KASH and SUN domain-containing protein. The SUN2:SYNE1/KASH1 LINC complex is a heterohexamer; the homotrimeric cloverleave-like conformation of the SUN domain is a prerequisite for LINC complex formation in which three separate SYNE1/KASH1 peptides bind at the interface of adjacent SUN domains. Self-associates. Interacts with SYNE3. Interacts with SPAG4/SUN4. May interact with MUSK. Interacts with F-actin via its N-terminal domain. Interacts with EMD and LMNA in vitro. Interacts (via KASH domain) with TMEM258. Post-translationally, the disulfid bond with SUN1 or SUN2 is required for stability of the respective LINC complex under tensile forces. As to expression, expressed in HeLa, A431, A172 and HaCaT cells (at protein level). Widely expressed. Highly expressed in skeletal and smooth muscles, heart, spleen, peripheral blood leukocytes, pancreas, cerebellum, stomach, kidney and placenta. Isoform GSRP-56 is predominantly expressed in heart and skeletal muscle (at protein level).

The protein localises to the nucleus outer membrane. It localises to the nucleus. Its subcellular location is the nucleus envelope. It is found in the cytoplasm. The protein resides in the cytoskeleton. The protein localises to the myofibril. It localises to the sarcomere. Its subcellular location is the golgi apparatus. In terms of biological role, multi-isomeric modular protein which forms a linking network between organelles and the actin cytoskeleton to maintain the subcellular spatial organization. As a component of the LINC (LInker of Nucleoskeleton and Cytoskeleton) complex involved in the connection between the nuclear lamina and the cytoskeleton. The nucleocytoplasmic interactions established by the LINC complex play an important role in the transmission of mechanical forces across the nuclear envelope and in nuclear movement and positioning. May be involved in nucleus-centrosome attachment and nuclear migration in neural progenitors implicating LINC complex association with SUN1/2 and probably association with cytoplasmic dynein-dynactin motor complexes; SYNE1 and SYNE2 may act redundantly. Required for centrosome migration to the apical cell surface during early ciliogenesis. May be involved in nuclear remodeling during sperm head formation in spermatogenesis; a probable SUN3:SYNE1/KASH1 LINC complex may tether spermatid nuclei to posterior cytoskeletal structures such as the manchette. This is Nesprin-1 from Homo sapiens (Human).